The primary structure comprises 123 residues: Small ribosomal subunit protein uS12 (123 aa).

Residues 1-26 form a disordered region; that stretch reads MPTINQLVRKPRKSRSSLNKAPALQH. Position 90 is a 3-methylthioaspartic acid (Asp90).

The protein belongs to the universal ribosomal protein uS12 family. Part of the 30S ribosomal subunit. Contacts proteins S8 and S17. May interact with IF1 in the 30S initiation complex.

Its function is as follows. With S4 and S5 plays an important role in translational accuracy. Interacts with and stabilizes bases of the 16S rRNA that are involved in tRNA selection in the A site and with the mRNA backbone. Located at the interface of the 30S and 50S subunits, it traverses the body of the 30S subunit contacting proteins on the other side and probably holding the rRNA structure together. The combined cluster of proteins S8, S12 and S17 appears to hold together the shoulder and platform of the 30S subunit. In Ehrlichia chaffeensis (strain ATCC CRL-10679 / Arkansas), this protein is Small ribosomal subunit protein uS12.